Here is a 134-residue protein sequence, read N- to C-terminus: Bet1-like protein At1g29060 (134 aa).

Residues methionine 1–tyrosine 12 show a composition bias toward gly residues. The disordered stretch occupies residues methionine 1–glycine 31. The Cytoplasmic segment spans residues methionine 1–histidine 110. The t-SNARE coiled-coil homology domain occupies aspartate 40 to serine 102. The chain crosses the membrane as a helical; Anchor for type IV membrane protein span at residues isoleucine 111–methionine 131. At phenylalanine 132–arginine 134 the chain is on the vesicular side.

It belongs to the BET1 family.

It is found in the golgi apparatus membrane. Its subcellular location is the endoplasmic reticulum membrane. Its function is as follows. Required for vesicular transport from the ER to the Golgi complex. Functions as a SNARE associated with ER-derived vesicles. The protein is Bet1-like protein At1g29060 of Arabidopsis thaliana (Mouse-ear cress).